A 92-amino-acid polypeptide reads, in one-letter code: MIKANLQLFAHKKGVGSTRNGRDSESKRLGVKRGDGQFVKAGNILVRQRGTKIHPGLNVGKGKDDTLFALVDGRVKFSRLGKDRKQVSIIPA.

Residues methionine 1–phenylalanine 9 constitute a propeptide that is removed on maturation.

The protein belongs to the bacterial ribosomal protein bL27 family. Post-translationally, the N-terminus is cleaved by ribosomal processing cysteine protease Prp.

The chain is Large ribosomal subunit protein bL27 from Acetivibrio thermocellus (strain ATCC 27405 / DSM 1237 / JCM 9322 / NBRC 103400 / NCIMB 10682 / NRRL B-4536 / VPI 7372) (Clostridium thermocellum).